A 784-amino-acid chain; its full sequence is LPS-assembly protein LptD (784 aa).

The signal sequence occupies residues 1–24 (MKKRIPTLLATMIATALYSQQGLA). Cystine bridges form between C31/C724 and C173/C725.

This sequence belongs to the LptD family. Component of the lipopolysaccharide transport and assembly complex. Interacts with LptE and LptA. Post-translationally, contains two intramolecular disulfide bonds.

The protein resides in the cell outer membrane. In terms of biological role, together with LptE, is involved in the assembly of lipopolysaccharide (LPS) at the surface of the outer membrane. In Escherichia coli O157:H7, this protein is LPS-assembly protein LptD.